The primary structure comprises 879 residues: Probable phospholipid transport protein YdbH (879 aa).

Residues 1 to 6 lie on the Cytoplasmic side of the membrane; the sequence is MLGKYK. The helical transmembrane segment at 7–29 threads the bilayer; the sequence is AVLALLLLIILVPLTLLMTLGLW. The Periplasmic segment spans residues 30 to 879; it reads VPTLAGIWLP…PQGKECEEKQ (850 aa).

As to quaternary structure, interacts with the outer membrane lipoprotein YnbE.

The protein localises to the cell inner membrane. Functionally, involved in outer membrane lipid homeostasis. Interacts with the outer membrane lipoprotein YnbE to form a functional protein bridge connecting the inner and outer membranes of the cell. Likely transports phospholipids between the inner membrane and the outer membrane. It would provide a bridge-like structure that protects phospholipids as they travel across the periplasm. In terms of biological role, tamB, YdbH and YhdP are redundant, but not equivalent, in performing an essential function for growth and maintaining lipid homeostasis in the outer membrane. Any of these three proteins is sufficient for growth. In Escherichia coli (strain K12), this protein is Probable phospholipid transport protein YdbH (ydbH).